The chain runs to 300 residues: UDP-N-acetylenolpyruvoylglucosamine reductase (300 aa).

Positions 28-193 (KTGGPADVLA…LQATFALEKG (166 aa)) constitute an FAD-binding PCMH-type domain. Residue arginine 172 is part of the active site. Serine 222 serves as the catalytic Proton donor. The active site involves glutamate 292.

Belongs to the MurB family. FAD serves as cofactor.

The protein resides in the cytoplasm. It catalyses the reaction UDP-N-acetyl-alpha-D-muramate + NADP(+) = UDP-N-acetyl-3-O-(1-carboxyvinyl)-alpha-D-glucosamine + NADPH + H(+). It participates in cell wall biogenesis; peptidoglycan biosynthesis. Functionally, cell wall formation. The sequence is that of UDP-N-acetylenolpyruvoylglucosamine reductase from Enterococcus faecalis (strain ATCC 700802 / V583).